The sequence spans 876 residues: GRB2-associated and regulator of MAPK protein (876 aa).

The segment at 9-318 is CABIT; that stretch reads KDVKWSSASF…NLIKGEVWQD (310 aa). Tyr-451 is subject to Phosphotyrosine. Disordered regions lie at residues 460 to 569 and 708 to 741; these read SVKR…TLSY and DRML…LSEP. Residues 461–471 are compositionally biased toward polar residues; the sequence is VKRSGQPLTRS. Residues 532-549 are compositionally biased toward pro residues; it reads PPVPPRSSKPSSPTPSVP. A compositionally biased stretch (polar residues) spans 556-569; it reads VRQQTRSPSPTLSY. Positions 811 to 876 constitute an SAM domain; the sequence is LSVEEVSKSL…QFINGWRPKM (66 aa).

It belongs to the GAREM family.

Functionally, adapter protein that may provide a link between cell surface epidermal growth factor receptor and the MAPK/ERK signaling pathway. May promote cell proliferation. The chain is GRB2-associated and regulator of MAPK protein (garem1) from Xenopus laevis (African clawed frog).